Here is a 523-residue protein sequence, read N- to C-terminus: Probable FAD synthase (523 aa).

Residues 20-111 are molybdenum cofactor biosynthesis protein-like; sequence AIVVIGDEIL…TDQLHFSDEI (92 aa). The interval 332–489 is FAD synthase; the sequence is QIALSFNGGK…SLGGRDNTVK (158 aa).

It in the N-terminal section; belongs to the MoaB/Mog family. The protein in the C-terminal section; belongs to the PAPS reductase family. FAD1 subfamily. Mg(2+) is required as a cofactor.

The catalysed reaction is FMN + ATP + H(+) = FAD + diphosphate. Its pathway is cofactor biosynthesis; FAD biosynthesis; FAD from FMN: step 1/1. Its function is as follows. Catalyzes the adenylation of flavin mononucleotide (FMN) to form flavin adenine dinucleotide (FAD) coenzyme. The polypeptide is Probable FAD synthase (Caenorhabditis briggsae).